We begin with the raw amino-acid sequence, 604 residues long: UvrABC system protein C (604 aa).

Positions 10–89 (ELPGVYLMKD…VKKNRPHYNI (80 aa)) constitute a GIY-YIG domain. The 36-residue stretch at 199–234 (SGTIKELQEKMNIHAIAQEYESAAVIRDQIDALKSL) folds into the UVR domain.

The protein belongs to the UvrC family. As to quaternary structure, interacts with UvrB in an incision complex.

Its subcellular location is the cytoplasm. Functionally, the UvrABC repair system catalyzes the recognition and processing of DNA lesions. UvrC both incises the 5' and 3' sides of the lesion. The N-terminal half is responsible for the 3' incision and the C-terminal half is responsible for the 5' incision. The sequence is that of UvrABC system protein C from Methanococcoides burtonii (strain DSM 6242 / NBRC 107633 / OCM 468 / ACE-M).